A 728-amino-acid polypeptide reads, in one-letter code: UvrABC system protein C (728 aa).

Residues 16–95 (DSPGVYRFRD…IKEYDPRFNV (80 aa)) enclose the GIY-YIG domain. In terms of domain architecture, UVR spans 208–243 (GTYLRRLERQMAEAAEEMEYERAARLRDDIGALKKA). Disordered regions lie at residues 473–535 (ADGE…GRPK) and 689–728 (VNTA…GQER). Over residues 487–505 (GDAAPNGDAAPNDGAAPDD) the composition is skewed to low complexity.

This sequence belongs to the UvrC family. Interacts with UvrB in an incision complex.

The protein localises to the cytoplasm. Its function is as follows. The UvrABC repair system catalyzes the recognition and processing of DNA lesions. UvrC both incises the 5' and 3' sides of the lesion. The N-terminal half is responsible for the 3' incision and the C-terminal half is responsible for the 5' incision. The protein is UvrABC system protein C of Streptomyces coelicolor (strain ATCC BAA-471 / A3(2) / M145).